The chain runs to 78 residues: Large ribosomal subunit protein eL20 (78 aa).

It belongs to the eukaryotic ribosomal protein eL20 family. In terms of assembly, part of the 50S ribosomal subunit. Binds 23S rRNA.

This is Large ribosomal subunit protein eL20 from Pyrobaculum islandicum (strain DSM 4184 / JCM 9189 / GEO3).